We begin with the raw amino-acid sequence, 137 residues long: Peptide methionine sulfoxide reductase MsrB (137 aa).

Positions 7-129 (PDHPATELNE…NSASLSFTDG (123 aa)) constitute a MsrB domain. C46, C49, C95, and C98 together coordinate Zn(2+). The active-site Nucleophile is the C118.

The protein belongs to the MsrB Met sulfoxide reductase family. Zn(2+) serves as cofactor.

It catalyses the reaction L-methionyl-[protein] + [thioredoxin]-disulfide + H2O = L-methionyl-(R)-S-oxide-[protein] + [thioredoxin]-dithiol. In Serratia proteamaculans (strain 568), this protein is Peptide methionine sulfoxide reductase MsrB.